A 156-amino-acid polypeptide reads, in one-letter code: B3 domain-containing protein At5g26805 (156 aa).

The TF-B3 DNA-binding region spans 57–155 (KFQLPMEKIR…MFCFSVLDGR (99 aa)).

The protein localises to the nucleus. In Arabidopsis thaliana (Mouse-ear cress), this protein is B3 domain-containing protein At5g26805.